The primary structure comprises 312 residues: Ribosomal protein L11 methyltransferase (312 aa).

S-adenosyl-L-methionine is bound by residues Thr-163, Gly-184, Asp-206, and Asn-248.

Belongs to the methyltransferase superfamily. PrmA family.

The protein resides in the cytoplasm. The catalysed reaction is L-lysyl-[protein] + 3 S-adenosyl-L-methionine = N(6),N(6),N(6)-trimethyl-L-lysyl-[protein] + 3 S-adenosyl-L-homocysteine + 3 H(+). Methylates ribosomal protein L11. The polypeptide is Ribosomal protein L11 methyltransferase (Clostridium botulinum (strain 657 / Type Ba4)).